We begin with the raw amino-acid sequence, 121 residues long: Large ribosomal subunit protein uL22 (121 aa).

It belongs to the universal ribosomal protein uL22 family. As to quaternary structure, part of the 50S ribosomal subunit.

Functionally, this protein binds specifically to 23S rRNA; its binding is stimulated by other ribosomal proteins, e.g. L4, L17, and L20. It is important during the early stages of 50S assembly. It makes multiple contacts with different domains of the 23S rRNA in the assembled 50S subunit and ribosome. The globular domain of the protein is located near the polypeptide exit tunnel on the outside of the subunit, while an extended beta-hairpin is found that lines the wall of the exit tunnel in the center of the 70S ribosome. This chain is Large ribosomal subunit protein uL22, found in Synechococcus sp. (strain WH7803).